The primary structure comprises 411 residues: S-adenosylmethionine synthase (411 aa).

His-15 is an ATP binding site. Mg(2+) is bound at residue Asp-17. Glu-43 is a K(+) binding site. 2 residues coordinate L-methionine: Glu-56 and Gln-99. The flexible loop stretch occupies residues 99–109; the sequence is QSPDIAQGVDT. ATP is bound by residues 174–176, 247–248, Asp-256, 262–263, Ala-279, and Lys-283; these read DGK, RF, and RK. Asp-256 provides a ligand contact to L-methionine. Lys-287 provides a ligand contact to L-methionine.

This sequence belongs to the AdoMet synthase family. Homotetramer; dimer of dimers. Mg(2+) is required as a cofactor. It depends on K(+) as a cofactor.

The protein localises to the cytoplasm. It catalyses the reaction L-methionine + ATP + H2O = S-adenosyl-L-methionine + phosphate + diphosphate. Its pathway is amino-acid biosynthesis; S-adenosyl-L-methionine biosynthesis; S-adenosyl-L-methionine from L-methionine: step 1/1. Functionally, catalyzes the formation of S-adenosylmethionine (AdoMet) from methionine and ATP. The overall synthetic reaction is composed of two sequential steps, AdoMet formation and the subsequent tripolyphosphate hydrolysis which occurs prior to release of AdoMet from the enzyme. The chain is S-adenosylmethionine synthase from Streptomyces spectabilis.